The primary structure comprises 629 residues: Natural resistance-associated macrophage protein 2 homolog (629 aa).

The Cytoplasmic segment spans residues 1–151; the sequence is MNNNNNNKKL…KSKFSIKKLK (151 aa). Residues 50–119 form a disordered region; sequence NVVNGSIEDS…SDIDSSGDSI (70 aa). The segment covering 62–85 has biased composition (low complexity); that stretch reads QQQQQQQQQQQQQQQQQQQQQQQQ. Residues 96–105 are compositionally biased toward basic and acidic residues; that stretch reads DKPFQDRDSN. A compositionally biased stretch (low complexity) spans 106–118; that stretch reads IGDGSDIDSSGDS. Residues 152–172 traverse the membrane as a helical segment; that stretch reads SFLGPALFISVGYMDPGNWAT. Residues 173–182 are Extracellular-facing; that stretch reads DLEGGSRFGY. A helical membrane pass occupies residues 183–203; sequence QLMWVLLFSNIMALFLQTLVI. Over 204–224 the chain is Cytoplasmic; that stretch reads KLALVTKNDLAQQCRKEYSKT. Residues 225-245 traverse the membrane as a helical segment; sequence VNIFLWLILELAIISTDLAEV. Residues 246 to 253 are Extracellular-facing; that stretch reads IGTAIGLN. The chain crosses the membrane as a helical span at residues 254 to 274; it reads ILFGLPLIAGVAITSLDTLLF. Residues 275 to 286 lie on the Cytoplasmic side of the membrane; sequence LAIQRWGIRKLE. A helical transmembrane segment spans residues 287–307; the sequence is LLILLLLSMITMCFVIELFLS. Over 308-326 the chain is Extracellular; it reads KPIASEVFSGFVPRLNSDS. The chain crosses the membrane as a helical span at residues 327–347; sequence VMVATGIVGATTMPHNLFLHG. Residues 348–376 lie on the Cytoplasmic side of the membrane; that stretch reads SVVKSRKIPNDRRKSVIKQAYRYNVIDTV. The chain crosses the membrane as a helical span at residues 377–397; that stretch reads LALNCAFFVNIAILMLAASVF. The Extracellular segment spans residues 398 to 421; the sequence is WKSNIQVTELSEAYRLLTKLMDGK. Residues 422–442 traverse the membrane as a helical segment; sequence LAAVLFGLGLFLAGQSSTITG. Topologically, residues 443–468 are cytoplasmic; sequence TMAGQIVMEGFIKLRIKPWLRRFITR. A helical transmembrane segment spans residues 469 to 489; the sequence is LLAIIPAAIVIIVLGDKGTYT. Topologically, residues 490 to 491 are extracellular; it reads LL. Residues 492–512 traverse the membrane as a helical segment; that stretch reads IISQVLLSIGLPFAVVPLIIF. At 513-527 the chain is on the cytoplasmic side; the sequence is TSSYEIMGEFKNRLS. Residues 528–548 form a helical membrane-spanning segment; it reads IIIINSIIALFIIGLNLATIF. Residues 549-565 are Extracellular-facing; that stretch reads QLINDFLHNDSIISKCL. Residue Asn557 is glycosylated (N-linked (GlcNAc...) asparagine). The chain crosses the membrane as a helical span at residues 566-586; the sequence is TIIFLIPLSIALCCLLLWLII. Over 587 to 629 the chain is Cytoplasmic; sequence SKINFFTNLLSKIFNNNNNNNNKNIINNNNNYSGNTINNQTIQ.

It belongs to the NRAMP family.

Its subcellular location is the cell membrane. Divalent transition metal (iron and manganese) transporter. The sequence is that of Natural resistance-associated macrophage protein 2 homolog (nramp2) from Dictyostelium discoideum (Social amoeba).